The primary structure comprises 380 residues: Alkanesulfonate monooxygenase (380 aa).

Belongs to the SsuD family. Homotetramer.

It catalyses the reaction an alkanesulfonate + FMNH2 + O2 = an aldehyde + FMN + sulfite + H2O + 2 H(+). Catalyzes the desulfonation of aliphatic sulfonates. In Pectobacterium atrosepticum (strain SCRI 1043 / ATCC BAA-672) (Erwinia carotovora subsp. atroseptica), this protein is Alkanesulfonate monooxygenase.